A 292-amino-acid polypeptide reads, in one-letter code: Putative two-component response regulator-like APRR4 (292 aa).

In terms of domain architecture, Response regulatory spans 43–158 (RVLVFDEDPS…DLRIVFKHLV (116 aa)). The segment at 168 to 215 (VTGEAEKAAGEKSSSVGDSTIRNPNKSKRSSCLEAEVNEEDRHDHNDR) is disordered. The span at 179–191 (KSSSVGDSTIRNP) shows a compositional bias: polar residues. Positions 225–275 (RVVWDEELHQNFLNAVDFLGLERAVPKKILDVMKVDYISRENVASHLQVTF) form a DNA-binding region, myb-like GARP.

It belongs to the ARR-like family. As to quaternary structure, binds the target DNA as a monomer.

The protein localises to the nucleus. Its function is as follows. Transcriptional activator that binds specifically to the DNA sequence 5'-[AG]GATT-3'. The polypeptide is Putative two-component response regulator-like APRR4 (APRR4) (Arabidopsis thaliana (Mouse-ear cress)).